The chain runs to 98 residues: Conotoxin Di19A (98 aa).

The signal sequence occupies residues 1–19 (MSTLGILLPIALLLPLANP). A propeptide spanning residues 20–49 (AENGDGQAMPRTRNLRSLSFGRTLRRLEKR) is cleaved from the precursor. 4-hydroxyproline is present on P53. A 4-carboxyglutamate modification is found at E63. P68, P93, and P97 each carry 4-hydroxyproline.

In terms of processing, contains 5 disulfide bonds. As to expression, expressed by the venom duct.

The protein resides in the secreted. In terms of biological role, injection of the synthetic peptide causes a hyperexcitable phenotype in mice greater than three weeks of age at lower doses, and lethargy at higher doses. The protein is Conotoxin Di19A of Conus distans (Distant cone).